Here is a 372-residue protein sequence, read N- to C-terminus: Putative RING-H2 finger protein ATL21A (372 aa).

A signal peptide spans 1–20; that stretch reads MTFSKQLFLYLFFLFPLLHA. A helical membrane pass occupies residues 242-262; the sequence is IILLSIIGPLTIFATCIAVGV. The segment at 320-362 adopts an RING-type; atypical zinc-finger fold; the sequence is CPICLSEYASKETVRCIPECDHCFHSECIDVWLKIHGSCPLCR.

Belongs to the RING-type zinc finger family. ATL subfamily.

The protein resides in the membrane. It carries out the reaction S-ubiquitinyl-[E2 ubiquitin-conjugating enzyme]-L-cysteine + [acceptor protein]-L-lysine = [E2 ubiquitin-conjugating enzyme]-L-cysteine + N(6)-ubiquitinyl-[acceptor protein]-L-lysine.. Its pathway is protein modification; protein ubiquitination. The chain is Putative RING-H2 finger protein ATL21A (ATL21A) from Arabidopsis thaliana (Mouse-ear cress).